The sequence spans 161 residues: Large ribosomal subunit protein uL11 (161 aa).

It belongs to the universal ribosomal protein uL11 family. Part of the ribosomal stalk of the 50S ribosomal subunit. Interacts with L10 and the large rRNA to form the base of the stalk. L10 forms an elongated spine to which L12 dimers bind in a sequential fashion forming a multimeric L10(L12)X complex.

Its function is as follows. Forms part of the ribosomal stalk which helps the ribosome interact with GTP-bound translation factors. This is Large ribosomal subunit protein uL11 from Methanocaldococcus jannaschii (strain ATCC 43067 / DSM 2661 / JAL-1 / JCM 10045 / NBRC 100440) (Methanococcus jannaschii).